A 546-amino-acid chain; its full sequence is ATP synthase subunit alpha (546 aa).

Glycine 172–threonine 179 contributes to the ATP binding site. 2 stretches are compositionally biased toward polar residues: residues phenylalanine 511–glycine 520 and threonine 536–lysine 546. The segment at phenylalanine 511 to lysine 546 is disordered.

Belongs to the ATPase alpha/beta chains family. In terms of assembly, F-type ATPases have 2 components, CF(1) - the catalytic core - and CF(0) - the membrane proton channel. CF(1) has five subunits: alpha(3), beta(3), gamma(1), delta(1), epsilon(1). CF(0) has three main subunits: a(1), b(2) and c(9-12). The alpha and beta chains form an alternating ring which encloses part of the gamma chain. CF(1) is attached to CF(0) by a central stalk formed by the gamma and epsilon chains, while a peripheral stalk is formed by the delta and b chains.

Its subcellular location is the cell membrane. The enzyme catalyses ATP + H2O + 4 H(+)(in) = ADP + phosphate + 5 H(+)(out). Functionally, produces ATP from ADP in the presence of a proton gradient across the membrane. The alpha chain is a regulatory subunit. In Corynebacterium aurimucosum (strain ATCC 700975 / DSM 44827 / CIP 107346 / CN-1) (Corynebacterium nigricans), this protein is ATP synthase subunit alpha.